The chain runs to 285 residues: MAATRLWHRTGRLLEIASAFGPWPGVYSTSPAFAEVLRMPQKQLRKVVYPLRELEQHLVTDSRPGLIEQRLFDPSLEDIGRAESVFAATVRNRIEYLSSAVRLDHAPSLRQPEVCFIGRSNVGKSSLIKALFSMAPDVEVRISKKPGHTKKMNFFKVGKHFTLVDMPGYGYRAPEDFVDMVETYLKERNNLKRTFLLVDSVVGITKLDNIAIEMCEEFALPYVMILTKIDKSSKGYLLKQVLQIQEFVNTQTQGCFPQLFPISAVTYSGVHLLKCFIADITGSLK.

Residues 110 to 283 (RQPEVCFIGR…KCFIADITGS (174 aa)) enclose the EngB-type G domain. GTP is bound by residues 118–125 (GRSNVGKS), 147–151 (GHTKK), 165–168 (DMPG), 227–230 (TKID), and 262–264 (ISA). Mg(2+) contacts are provided by Ser125 and Thr149.

This sequence belongs to the TRAFAC class TrmE-Era-EngA-EngB-Septin-like GTPase superfamily. EngB GTPase family. The cofactor is Mg(2+).

This Rattus norvegicus (Rat) protein is GTP-binding protein 8 (Gtpbp8).